Reading from the N-terminus, the 3595-residue chain is Replicase polyprotein 1ab (3595 aa).

Residues 3 to 23 form a C4-type; atypical zinc finger; that stretch reads CECPRSNLVVMCSGAFCCVLC. The Peptidase C31 domain maps to 56-164; that stretch reads SGLEGRYCAL…PTTIPFNTTG (109 aa). Catalysis depends on for Nsp1-alpha papain-like cysteine proteinase activity residues Cys-63 and His-130. The 112-residue stretch at 239–350 folds into the Peptidase C32 domain; it reads LSFEHGRCWL…LKLPGKTYFG (112 aa). Residues Cys-246 and His-309 each act as for Nsp1-beta papain-like cysteine proteinase activity in the active site. Residues Cys-378 and His-430 each act as for Nsp2 cysteine proteinase activity in the active site. The segment at 482 to 527 is disordered; sequence RRGGGKKSGQSSGVRAPGRTTPDLAGDWGKAVDDQEKTASKVTTDK. Residues 511 to 520 are compositionally biased toward basic and acidic residues; the sequence is KAVDDQEKTA. Positions 633–736 constitute a Peptidase C33 domain; sequence TFIPPPDGGC…HGWCSSLLSE (104 aa). The interval 808–862 is disordered; that stretch reads QVRTVDPSQPAAPLPPVPRPRKRKAAAQQVSKVPSEQDPSLAHDPPEKPDSVRPP. Positions 851–860 are enriched in basic and acidic residues; that stretch reads DPPEKPDSVR. Helical transmembrane passes span 922 to 942, 951 to 971, 1019 to 1039, 1239 to 1259, 1316 to 1336, 1345 to 1365, and 1381 to 1401; these read MFFL…AGVI, ILCC…AISS, VALF…VIGV, IFRT…GYWV, PYIV…PGII, ALLP…IIAA, and AFVD…GWIL. The segment at 922 to 1039 is HD1; sequence MFFLFLGSPL…MVDVLLVIGV (118 aa). Positions 1239-1399 are HD2; that stretch reads IFRTALAAAW…VVLTALLVGW (161 aa). The 201-residue stretch at 1464–1664 folds into the Peptidase S32 domain; it reads GLLREKTRAS…RLLESSINLE (201 aa). Catalysis depends on charge relay system; for 3C-like serine proteinase activity residues His-1502, Asp-1527, and Ser-1580. A run of 4 helical transmembrane segments spans residues 1673-1693, 1711-1731, 1744-1764, and 1784-1804; these read IIVA…PFVV, YNYS…IFFI, ALIC…IILG, and AIAI…LELF. Positions 1687 to 1804 are HD3; the sequence is LSIPFVVAFF…CVAACCLELF (118 aa). The NiRAN domain occupies 2083–2253; sequence DMNRLRAIIS…YPYKLHPVRG (171 aa). Residues 2491–2625 enclose the RdRp catalytic domain; that stretch reads GRCLETDLAS…LNESDDLPNF (135 aa). The 67-residue stretch at 2746–2812 folds into the AV ZBD domain; sequence GKEVQVCSIC…IPILKDRTKF (67 aa). Zn(2+) contacts are provided by Cys-2752, Cys-2755, Cys-2765, Cys-2770, Cys-2773, His-2777, His-2779, Cys-2782, Cys-2789, His-2791, Cys-2798, and Cys-2801. One can recognise a (+)RNA virus helicase ATP-binding domain in the interval 2862 to 3022; that stretch reads DLPDGKYSMK…VFELMKKNAL (161 aa). An ATP-binding site is contributed by 2897–2904; it reads GPPGSGKT. Positions 3023–3157 constitute a (+)RNA virus helicase C-terminal domain; the sequence is HAIYRFGQNI…DGKARVMLSD (135 aa). Residues 3196–3292 form the AV-Nsp11N/CoV-Nsp15M domain; sequence SGSLSPLPRV…LTKFLDGRAV (97 aa). One can recognise a NendoU domain in the interval 3294–3416; sequence MEDSVYSTGR…MVWRDQTMYF (123 aa). Catalysis depends on residues His-3325, His-3340, and Lys-3369.

This sequence belongs to the arteriviridae polyprotein family. Specific enzymatic cleavages in vivo by its own proteases yield mature proteins. There are two alternative pathways for processing. Either nsp4-5 is cleaved, which represents the major pathway or the nsp5-6 and nsp6-7 are processed, which represents the minor pathway. The major pathway occurs when nsp2 acts as a cofactor for nsp4.

The protein localises to the host membrane. Its subcellular location is the host cytoplasm. It is found in the host perinuclear region. The catalysed reaction is RNA(n) + a ribonucleoside 5'-triphosphate = RNA(n+1) + diphosphate. It carries out the reaction ATP + H2O = ADP + phosphate + H(+). It catalyses the reaction uridylyl-uridylyl-ribonucleotide-RNA = a 3'-end uridylyl-2',3'-cyclophospho-uridine-RNA + a 5'-end dephospho-ribonucleoside-RNA. Functionally, the replicase polyprotein 1ab is a multifunctional protein: it contains the activities necessary for the transcription of negative stranded RNA, leader RNA, subgenomic mRNAs and progeny virion RNA as well as proteinases responsible for the cleavage of the polyprotein into functional products. In terms of biological role, the Nsp1 chain is essential for viral subgenomic mRNA synthesis. Its function is as follows. The 3C-like serine proteinase chain is responsible for the majority of cleavages as it cleaves the C-terminus of the polyprotein. Plays a role in viral transcription/replication and prevents the simultaneous activation of host cell dsRNA sensors, such as MDA5/IFIH1, OAS, and PKR. Acts by degrading the 5'-polyuridines generated during replication of the poly(A) region of viral genomic and subgenomic RNAs. Catalyzes a two-step reaction in which a 2'3'-cyclic phosphate (2'3'-cP) is first generated by 2'-O transesterification, which is then hydrolyzed to a 3'-phosphate (3'-P). If not degraded, poly(U) RNA would hybridize with poly(A) RNA tails and activate host dsRNA sensors. Functionally, the helicase chain, which contains a zinc finger structure, displays RNA and DNA duplex-unwinding activities with 5' to 3' polarity. The protein is Replicase polyprotein 1ab (rep) of Simian hemorrhagic fever virus (SHFV).